The primary structure comprises 266 residues: 15-hydroxyprostaglandin dehydrogenase [NAD(+)] (266 aa).

NAD(+) contacts are provided by residues 12 to 20 (GAAQGIGRA), 36 to 37 (DW), 63 to 65 (CDV), and Asn-91. Positions 138 and 148 each coordinate substrate. Residue Tyr-151 is the Proton acceptor of the active site. NAD(+)-binding positions include 151–155 (YCASK) and 186–188 (VNT).

The protein belongs to the short-chain dehydrogenases/reductases (SDR) family. As to quaternary structure, homodimer.

The protein localises to the cytoplasm. It catalyses the reaction prostaglandin E2 + NAD(+) = 15-oxoprostaglandin E2 + NADH + H(+). The catalysed reaction is (15S)-hydroxy-(5Z,8Z,11Z,13E)-eicosatetraenoate + NAD(+) = 15-oxo-(5Z,8Z,11Z,13E)-eicosatetraenoate + NADH + H(+). The enzyme catalyses (11R)-hydroxy-(5Z,8Z,12E,14Z)-eicosatetraenoate + NAD(+) = 11-oxo-(5Z,8Z,12E,14Z)-eicosatetraenoate + NADH + H(+). It carries out the reaction lipoxin A4 + NAD(+) = 15-oxo-(5S,6R)-dihydroxy-(7E,9E,11Z,13E)-eicosatetraenoate + NADH + H(+). It catalyses the reaction 15-oxo-(5S,6R)-dihydroxy-(7E,9E,11Z)-eicosatrienoate + NADH + H(+) = (5S,6R,15S)-trihydroxy-(7E,9E,11Z)-eicosatrienoate + NAD(+). The catalysed reaction is prostaglandin A1 + NAD(+) = 15-oxo-prostaglandin A1 + NADH + H(+). The enzyme catalyses prostaglandin E1 + NAD(+) = 15-oxoprostaglandin E1 + NADH + H(+). It carries out the reaction 14-hydroxy-(4Z,7Z,10Z,12E,16Z,19Z)-docosahexaenoate + NAD(+) = 14-oxo-(4Z,7Z,10Z,12E,16Z,19Z)-docosahexaenoate + NADH + H(+). It catalyses the reaction resolvin E1 + NAD(+) = 18-oxo-resolvin E1 + NADH + H(+). The catalysed reaction is resolvin D1 + NAD(+) = 8-oxoresolvin D1 + NADH + H(+). The enzyme catalyses resolvin D1 + NAD(+) = 17-oxoresolvin D1 + NADH + H(+). It carries out the reaction resolvin D2 + NAD(+) = 7-oxoresolvin D2 + NADH + H(+). It catalyses the reaction resolvin D2 + NAD(+) = 16-oxoresolvin D2 + NADH + H(+). Its function is as follows. Catalyzes the NAD-dependent dehydrogenation (oxidation) of a broad array of hydroxylated polyunsaturated fatty acids (mainly eicosanoids and docosanoids, including prostaglandins, lipoxins and resolvins), yielding their corresponding keto (oxo) metabolites. Decreases the levels of the pro-proliferative prostaglandins such as prostaglandin E2 (whose activity is increased in cancer because of an increase in the expression of cyclooxygenase 2) and generates oxo-fatty acid products that can profoundly influence cell function by abrogating pro-inflammatory cytokine expression. Converts resolvins E1, D1 and D2 to their oxo products, which represents a mode of resolvin inactivation. Resolvin E1 plays important roles during the resolution phase of acute inflammation, while resolvins D1 and D2 have a unique role in obesity-induced adipose inflammation. This is 15-hydroxyprostaglandin dehydrogenase [NAD(+)] (HPGD) from Macaca fascicularis (Crab-eating macaque).